The following is a 308-amino-acid chain: SAP30-binding protein (308 aa).

A disordered region spans residues 15 to 101 (AEYSDPESDG…EAEKRDPQEL (87 aa)). Phosphoserine is present on residues serine 18, serine 22, serine 43, and serine 52. The span at 57 to 78 (DEDGYEEEEDENSKQSEDDDSE) shows a compositional bias: acidic residues. Positions 79-99 (TEKPEADDPKDNTEAEKRDPQ) are enriched in basic and acidic residues. Lysine 95 is covalently cross-linked (Glycyl lysine isopeptide (Lys-Gly) (interchain with G-Cter in SUMO2)). Position 113 is a phosphoserine (serine 113). Glycyl lysine isopeptide (Lys-Gly) (interchain with G-Cter in SUMO2) cross-links involve residues lysine 220, lysine 304, and lysine 305.

The protein belongs to the HCNGP family. Interacts with histone deacetylase complex subunit SAP30.

Its subcellular location is the nucleus. Plays a role in transcriptional repression by promoting histone deacetylase activity, leading to deacetylation of histone H3. May be involved in the regulation of beta-2-microglobulin genes. This chain is SAP30-binding protein (Sap30bp), found in Mus musculus (Mouse).